A 289-amino-acid polypeptide reads, in one-letter code: Pantothenate synthetase (289 aa).

Residue 33–40 (MGYLHEGH) participates in ATP binding. The active-site Proton donor is His40. Gln70 is a (R)-pantoate binding site. Gln70 serves as a coordination point for beta-alanine. Position 157-160 (157-160 (GEKD)) interacts with ATP. Residue Gln163 participates in (R)-pantoate binding. ATP contacts are provided by residues Val186 and 194-197 (LSSR).

It belongs to the pantothenate synthetase family. In terms of assembly, homodimer.

The protein localises to the cytoplasm. It catalyses the reaction (R)-pantoate + beta-alanine + ATP = (R)-pantothenate + AMP + diphosphate + H(+). The protein operates within cofactor biosynthesis; (R)-pantothenate biosynthesis; (R)-pantothenate from (R)-pantoate and beta-alanine: step 1/1. Catalyzes the condensation of pantoate with beta-alanine in an ATP-dependent reaction via a pantoyl-adenylate intermediate. In Anaeromyxobacter dehalogenans (strain 2CP-C), this protein is Pantothenate synthetase.